The following is a 118-amino-acid chain: Mediator of RNA polymerase II transcription subunit 11 (118 aa).

This sequence belongs to the Mediator complex subunit 11 family. Component of the Mediator complex.

The protein resides in the nucleus. In terms of biological role, component of the Mediator complex, a coactivator involved in the regulated transcription of nearly all RNA polymerase II-dependent genes. Mediator functions as a bridge to convey information from gene-specific regulatory proteins to the basal RNA polymerase II transcription machinery. Mediator is recruited to promoters by direct interactions with regulatory proteins and serves as a scaffold for the assembly of a functional pre-initiation complex with RNA polymerase II and the general transcription factors. This chain is Mediator of RNA polymerase II transcription subunit 11 (med11), found in Xenopus tropicalis (Western clawed frog).